Here is a 276-residue protein sequence, read N- to C-terminus: Diaminopimelate epimerase (276 aa).

Substrate contacts are provided by Asn13, Gln46, and Asn66. The Proton donor role is filled by Cys75. Substrate-binding positions include 76-77, Asn159, Asn192, and 210-211; these read GN and ER. Cys219 (proton acceptor) is an active-site residue. Residue 220–221 participates in substrate binding; it reads GT.

The protein belongs to the diaminopimelate epimerase family. As to quaternary structure, homodimer.

Its subcellular location is the cytoplasm. The catalysed reaction is (2S,6S)-2,6-diaminopimelate = meso-2,6-diaminopimelate. The protein operates within amino-acid biosynthesis; L-lysine biosynthesis via DAP pathway; DL-2,6-diaminopimelate from LL-2,6-diaminopimelate: step 1/1. Functionally, catalyzes the stereoinversion of LL-2,6-diaminopimelate (L,L-DAP) to meso-diaminopimelate (meso-DAP), a precursor of L-lysine and an essential component of the bacterial peptidoglycan. This is Diaminopimelate epimerase from Pseudomonas entomophila (strain L48).